A 339-amino-acid polypeptide reads, in one-letter code: Glucokinase (339 aa).

16 to 21 (GDIGGT) is a binding site for ATP.

It belongs to the bacterial glucokinase family.

It is found in the cytoplasm. The enzyme catalyses D-glucose + ATP = D-glucose 6-phosphate + ADP + H(+). This Sinorhizobium fredii (strain NBRC 101917 / NGR234) protein is Glucokinase.